The primary structure comprises 158 residues: 2-C-methyl-D-erythritol 2,4-cyclodiphosphate synthase (158 aa).

The a divalent metal cation site is built by aspartate 8 and histidine 10. Residues 8 to 10 (DVH) and 34 to 35 (HS) each bind 4-CDP-2-C-methyl-D-erythritol 2-phosphate. Position 42 (histidine 42) interacts with a divalent metal cation. 4-CDP-2-C-methyl-D-erythritol 2-phosphate is bound by residues 56 to 58 (DIG), 132 to 135 (TTNE), and arginine 142.

The protein belongs to the IspF family. In terms of assembly, homotrimer. A divalent metal cation serves as cofactor.

It catalyses the reaction 4-CDP-2-C-methyl-D-erythritol 2-phosphate = 2-C-methyl-D-erythritol 2,4-cyclic diphosphate + CMP. Its pathway is isoprenoid biosynthesis; isopentenyl diphosphate biosynthesis via DXP pathway; isopentenyl diphosphate from 1-deoxy-D-xylulose 5-phosphate: step 4/6. Functionally, involved in the biosynthesis of isopentenyl diphosphate (IPP) and dimethylallyl diphosphate (DMAPP), two major building blocks of isoprenoid compounds. Catalyzes the conversion of 4-diphosphocytidyl-2-C-methyl-D-erythritol 2-phosphate (CDP-ME2P) to 2-C-methyl-D-erythritol 2,4-cyclodiphosphate (ME-CPP) with a corresponding release of cytidine 5-monophosphate (CMP). This chain is 2-C-methyl-D-erythritol 2,4-cyclodiphosphate synthase, found in Chlorobium phaeobacteroides (strain DSM 266 / SMG 266 / 2430).